Consider the following 1139-residue polypeptide: Protein kinase C-like (1139 aa).

The region spanning 1–67 (MNEDEAIQNI…LRDIQLRKVG (67 aa)) is the REM-1 1 domain. Positions 72–132 (GMSLGADDAG…PGPGAASKAR (61 aa)) are disordered. The region spanning 142–219 (KYDTPYLGPR…LKRYEELHVD (78 aa)) is the REM-1 2 domain. The C2 domain maps to 225–343 (AQDDDSINTP…MRRKRIEAEM (119 aa)). The tract at residues 349–404 (VSADRMGSTGAPSQFPMSPTSGSFGGSPQAPGGGQGQAPGPFGDPAPQPQVVTGPI) is disordered. Over residues 358–368 (GAPSQFPMSPT) the composition is skewed to polar residues. Phorbol-ester/DAG-type zinc fingers lie at residues 454 to 502 (GHKF…VTKC) and 522 to 572 (PHRF…PDFC). 3 disordered regions span residues 590 to 637 (KQRQ…TPSA), 649 to 668 (QTSPQRPGQPGRAPSDLSAA), and 679 to 804 (QGRT…TDPG). Over residues 594–614 (QKTTSLSEKTLRSGATKSPTT) the composition is skewed to polar residues. Over residues 615 to 629 (AGHGSSASFSSAGAG) the composition is skewed to low complexity. Pro residues-rich tracts occupy residues 723–734 (AQPPAQQRPPQP) and 743–760 (AQMPPQQPPPQQPLPPQP). A compositionally biased stretch (low complexity) spans 761-793 (GQQYQQQQPAAQKPQPQPPATAQGAAAGPPGSQ). The region spanning 814-1073 (FNFLAVLGKG…AQEVMSQPFF (260 aa)) is the Protein kinase domain. Residues 820 to 828 (LGKGNFGKV) and Lys843 each bind ATP. The active-site Proton acceptor is Asp939. One can recognise an AGC-kinase C-terminal domain in the interval 1074-1139 (RNINWDDIYH…RGFSYTADLD (66 aa)).

Belongs to the protein kinase superfamily. AGC Ser/Thr protein kinase family. PKC subfamily.

The enzyme catalyses L-seryl-[protein] + ATP = O-phospho-L-seryl-[protein] + ADP + H(+). The catalysed reaction is L-threonyl-[protein] + ATP = O-phospho-L-threonyl-[protein] + ADP + H(+). Stimulated about twofold by phospholipids or phorbol esters. This Hypocrea jecorina (Trichoderma reesei) protein is Protein kinase C-like (pkc1).